Reading from the N-terminus, the 104-residue chain is Large ribosomal subunit protein uL23 (104 aa).

Belongs to the universal ribosomal protein uL23 family. As to quaternary structure, part of the 50S ribosomal subunit. Contacts protein L29, and trigger factor when it is bound to the ribosome.

In terms of biological role, one of the early assembly proteins it binds 23S rRNA. One of the proteins that surrounds the polypeptide exit tunnel on the outside of the ribosome. Forms the main docking site for trigger factor binding to the ribosome. In Leptospira borgpetersenii serovar Hardjo-bovis (strain JB197), this protein is Large ribosomal subunit protein uL23.